Here is a 445-residue protein sequence, read N- to C-terminus: Tubulin beta-7 chain (445 aa).

GTP is bound by residues Q11, E69, S138, G142, T143, G144, N204, and N226. E69 contacts Mg(2+). Residues 421–445 (EYQQYQDATAEDEEYEEEEEEEEET) form a disordered region. Residues 429-445 (TAEDEEYEEEEEEEEET) are compositionally biased toward acidic residues.

The protein belongs to the tubulin family. In terms of assembly, dimer of alpha and beta chains. A typical microtubule is a hollow water-filled tube with an outer diameter of 25 nm and an inner diameter of 15 nM. Alpha-beta heterodimers associate head-to-tail to form protofilaments running lengthwise along the microtubule wall with the beta-tubulin subunit facing the microtubule plus end conferring a structural polarity. Microtubules usually have 13 protofilaments but different protofilament numbers can be found in some organisms and specialized cells. The cofactor is Mg(2+).

It is found in the cytoplasm. Its subcellular location is the cytoskeleton. Functionally, tubulin is the major constituent of microtubules, a cylinder consisting of laterally associated linear protofilaments composed of alpha- and beta-tubulin heterodimers. Microtubules grow by the addition of GTP-tubulin dimers to the microtubule end, where a stabilizing cap forms. Below the cap, tubulin dimers are in GDP-bound state, owing to GTPase activity of alpha-tubulin. The polypeptide is Tubulin beta-7 chain (TUBB7) (Zea mays (Maize)).